Reading from the N-terminus, the 238-residue chain is Sugar fermentation stimulation protein homolog (238 aa).

Belongs to the SfsA family.

The protein is Sugar fermentation stimulation protein homolog of Haemophilus influenzae (strain PittGG).